Reading from the N-terminus, the 177-residue chain is Peptidyl-tRNA hydrolase (177 aa).

Tyrosine 12 serves as a coordination point for tRNA. Histidine 17 functions as the Proton acceptor in the catalytic mechanism. 3 residues coordinate tRNA: phenylalanine 63, asparagine 65, and asparagine 111.

Belongs to the PTH family. In terms of assembly, monomer.

The protein localises to the cytoplasm. The enzyme catalyses an N-acyl-L-alpha-aminoacyl-tRNA + H2O = an N-acyl-L-amino acid + a tRNA + H(+). Functionally, hydrolyzes ribosome-free peptidyl-tRNAs (with 1 or more amino acids incorporated), which drop off the ribosome during protein synthesis, or as a result of ribosome stalling. Its function is as follows. Catalyzes the release of premature peptidyl moieties from peptidyl-tRNA molecules trapped in stalled 50S ribosomal subunits, and thus maintains levels of free tRNAs and 50S ribosomes. This Buchnera aphidicola subsp. Acyrthosiphon pisum (strain 5A) protein is Peptidyl-tRNA hydrolase.